The chain runs to 241 residues: Large ribosomal subunit protein uL1 (241 aa).

The protein belongs to the universal ribosomal protein uL1 family. Part of the 50S ribosomal subunit.

In terms of biological role, binds directly to 23S rRNA. The L1 stalk is quite mobile in the ribosome, and is involved in E site tRNA release. Functionally, protein L1 is also a translational repressor protein, it controls the translation of the L11 operon by binding to its mRNA. The protein is Large ribosomal subunit protein uL1 of Streptomyces avermitilis (strain ATCC 31267 / DSM 46492 / JCM 5070 / NBRC 14893 / NCIMB 12804 / NRRL 8165 / MA-4680).